Here is a 250-residue protein sequence, read N- to C-terminus: Adapter protein MecA (250 aa).

Belongs to the MecA family. Homodimer.

In terms of biological role, enables the recognition and targeting of unfolded and aggregated proteins to the ClpC protease or to other proteins involved in proteolysis. The polypeptide is Adapter protein MecA (Streptococcus sanguinis (strain SK36)).